The primary structure comprises 418 residues: Outer membrane protein assembly factor BamB (418 aa).

The N-terminal stretch at 1–28 (MFHNTCGRKGRFARAMGMALAISVTLSG) is a signal peptide. The N-palmitoyl cysteine moiety is linked to residue cysteine 29. Cysteine 29 carries the S-diacylglycerol cysteine lipid modification.

The protein belongs to the BamB family. Part of the Bam complex.

It is found in the cell outer membrane. In terms of biological role, part of the outer membrane protein assembly complex, which is involved in assembly and insertion of beta-barrel proteins into the outer membrane. This chain is Outer membrane protein assembly factor BamB, found in Alteromonas naphthalenivorans.